Consider the following 203-residue polypeptide: MPRMSETVPTAAAGRSPQEAEIVAALGDRPVVLIGMMGAGKSTVGRRLALRLGLPFLDADTEIESAAAMTIPEIFETHGEPHFRDGEARVISRLLDGGTKVLATGGGAFMREETRDRIREKAISMWLEAEADVILRRVKRRADRPLLKTPDPAGTIARLIAERYPLYREADITIASRDVPHEKIVDECVAALHDYLCAAPPQP.

Residue 38-43 (GAGKST) participates in ATP binding. S42 is a Mg(2+) binding site. Residues D60, R84, and G106 each coordinate substrate. R144 provides a ligand contact to ATP. R163 serves as a coordination point for substrate.

Belongs to the shikimate kinase family. As to quaternary structure, monomer. Requires Mg(2+) as cofactor.

Its subcellular location is the cytoplasm. The enzyme catalyses shikimate + ATP = 3-phosphoshikimate + ADP + H(+). The protein operates within metabolic intermediate biosynthesis; chorismate biosynthesis; chorismate from D-erythrose 4-phosphate and phosphoenolpyruvate: step 5/7. Its function is as follows. Catalyzes the specific phosphorylation of the 3-hydroxyl group of shikimic acid using ATP as a cosubstrate. The polypeptide is Shikimate kinase (Rhodopseudomonas palustris (strain ATCC BAA-98 / CGA009)).